Here is a 296-residue protein sequence, read N- to C-terminus: Transcription repressor OFP3 (296 aa).

Disordered stretches follow at residues 27–115 (MSRS…SANA) and 131–196 (PSDQ…AHSS). Positions 60-69 (LSSTAHHPQA) are enriched in polar residues. Residues 78–88 (SFKRKIKRKTV) are compositionally biased toward basic residues. Residues 92-115 (SSRLKLSTSSSLNHRSKSSSSANA) are compositionally biased toward low complexity. Over residues 136–159 (FVHDPEPHSSIDIKDELSVRKLDD) the composition is skewed to basic and acidic residues. The region spanning 228 to 287 (IVLSSVDPEKDFRESMVEMIMENKMREQKDLEDLLACYLSLNSSEYHDVIIKAFENTWLH) is the OVATE domain.

In terms of assembly, interacts with BLH1, BLH3, KNAT5 and KNAT7.

The protein localises to the nucleus. Functionally, transcriptional repressor that may regulate multiple aspects of plant growth and development through the regulation of BEL1-LIKE (BLH) and KNOX TALE (KNAT) homeodomain transcription factors. The sequence is that of Transcription repressor OFP3 (OFP3) from Arabidopsis thaliana (Mouse-ear cress).